We begin with the raw amino-acid sequence, 82 residues long: Acyl carrier protein (82 aa).

One can recognise a Carrier domain in the interval 4–79 (EKIFQELKNI…DVVDIIESNL (76 aa)). Ser39 carries the post-translational modification O-(pantetheine 4'-phosphoryl)serine.

It belongs to the acyl carrier protein (ACP) family. Post-translationally, 4'-phosphopantetheine is transferred from CoA to a specific serine of apo-ACP by AcpS. This modification is essential for activity because fatty acids are bound in thioester linkage to the sulfhydryl of the prosthetic group.

It is found in the cytoplasm. It functions in the pathway lipid metabolism; fatty acid biosynthesis. Functionally, carrier of the growing fatty acid chain in fatty acid biosynthesis. The protein is Acyl carrier protein of Coprothermobacter proteolyticus (strain ATCC 35245 / DSM 5265 / OCM 4 / BT).